The primary structure comprises 220 residues: Putative amino-acid transporter YisU (220 aa).

6 helical membrane-spanning segments follow: residues 15 to 35 (FFSM…ILPL), 67 to 87 (TLLI…LPVF), 89 to 109 (TVMM…TWNI), 128 to 148 (AFAA…IGVI), 161 to 181 (WLFM…LAIA), and 195 to 215 (MLIV…YFGV).

This sequence belongs to the LysE/ArgO transporter (TC 2.A.75) family.

It localises to the cell membrane. The chain is Putative amino-acid transporter YisU (yisU) from Bacillus subtilis (strain 168).